We begin with the raw amino-acid sequence, 105 residues long: Met repressor (105 aa).

This sequence belongs to the MetJ family. As to quaternary structure, homodimer.

The protein resides in the cytoplasm. Functionally, this regulatory protein, when combined with SAM (S-adenosylmethionine) represses the expression of the methionine regulon and of enzymes involved in SAM synthesis. This is Met repressor from Yersinia enterocolitica serotype O:8 / biotype 1B (strain NCTC 13174 / 8081).